We begin with the raw amino-acid sequence, 240 residues long: EF-hand domain-containing protein D2 (240 aa).

Ala2 is modified (N-acetylalanine). A Phosphoserine modification is found at Ser11. The disordered stretch occupies residues 13–38 (RLQMEGEGGGETPEQPGLNGAAAAAA). 2 positions are modified to phosphoserine: Ser74 and Ser76. Tyr83 bears the Phosphotyrosine mark. EF-hand domains are found at residues 92-127 (KQIK…LGAP) and 128-163 (QTHL…AAAG). Ca(2+) contacts are provided by Asp105, Asp109, Glu116, Asp141, Asp143, Asp145, Lys147, and Glu152. Position 233 is an N6-acetyllysine (Lys233).

In terms of assembly, interacts with CASP9; with inactive form. As to expression, found in lymphocytes; preferentially expressed in CD8+ cells.

It localises to the membrane raft. Its function is as follows. May regulate B-cell receptor (BCR)-induced immature and primary B-cell apoptosis. Plays a role as negative regulator of the canonical NF-kappa-B-activating branch. Controls spontaneous apoptosis through the regulation of BCL2L1 abundance. This Homo sapiens (Human) protein is EF-hand domain-containing protein D2 (EFHD2).